The chain runs to 470 residues: Protein nucleotidyltransferase YdiU (470 aa).

ATP is bound by residues Gly-86, Gly-88, Arg-89, Lys-109, Asp-121, Gly-122, Arg-172, and Arg-179. Residue Asp-244 is the Proton acceptor of the active site. Residues Asn-245 and Asp-254 each contribute to the Mg(2+) site. Asp-254 serves as a coordination point for ATP.

It belongs to the SELO family. The cofactor is Mg(2+). Requires Mn(2+) as cofactor.

The catalysed reaction is L-seryl-[protein] + ATP = 3-O-(5'-adenylyl)-L-seryl-[protein] + diphosphate. The enzyme catalyses L-threonyl-[protein] + ATP = 3-O-(5'-adenylyl)-L-threonyl-[protein] + diphosphate. It catalyses the reaction L-tyrosyl-[protein] + ATP = O-(5'-adenylyl)-L-tyrosyl-[protein] + diphosphate. It carries out the reaction L-histidyl-[protein] + UTP = N(tele)-(5'-uridylyl)-L-histidyl-[protein] + diphosphate. The catalysed reaction is L-seryl-[protein] + UTP = O-(5'-uridylyl)-L-seryl-[protein] + diphosphate. The enzyme catalyses L-tyrosyl-[protein] + UTP = O-(5'-uridylyl)-L-tyrosyl-[protein] + diphosphate. Functionally, nucleotidyltransferase involved in the post-translational modification of proteins. It can catalyze the addition of adenosine monophosphate (AMP) or uridine monophosphate (UMP) to a protein, resulting in modifications known as AMPylation and UMPylation. In Roseobacter denitrificans (strain ATCC 33942 / OCh 114) (Erythrobacter sp. (strain OCh 114)), this protein is Protein nucleotidyltransferase YdiU.